An 887-amino-acid chain; its full sequence is MSKSSRIRMKSRTRYLIAILLVISLCSKASSHDDEKKKKGVTYDGTSLIINGKRELLFSGSVHYPRSTPHMWPSIIDKARIGGLNTIQTYVFWNVHEPEQGKYDFKGRFDLVKFIKLIHEKGLYVTLRLGPFIQAEWNHGGLPYWLREVPDVYFRTNNEPFKEHTERYVRKILGMMKEEKLFASQGGPIILGQIENEYNAVQLAYKENGEKYIKWAANLVESMNLGIPWVMCKQNDAPGNLINACNGRHCGDTFPGPNRHDKPSLWTENWTTQFRVFGDPPTQRTVEDIAFSVARYFSKNGSHVNYYMYHGGTNFGRTSAHFVTTRYYDDAPLDEFGLEKAPKYGHLKHVHRALRLCKKALFWGQLRAQTLGPDTEVRYYEQPGTKVCAAFLSNNNTRDTNTIKFKGQDYVLPSRSISILPDCKTVVYNTAQIVAQHSWRDFVKSEKTSKGLKFEMFSENIPSLLDGDSLIPGELYYLTKDKTDYAWYTTSVKIDEDDFPDQKGLKTILRVASLGHALIVYVNGEYAGKAHGRHEMKSFEFAKPVNFKTGDNRISILGVLTGLPDSGSYMEHRFAGPRAISIIGLKSGTRDLTENNEWGHLAGLEGEKKEVYTEEGSKKVKWEKDGKRKPLTWYKTYFETPEGVNAVAIRMKAMGKGLIWVNGIGVGRYWMSFLSPLGEPTQTEYHIPRSFMKGEKKKNMLVILEEEPGVKLESIDFVLVNRDTICSNVGEDYPVSVKSWKREGPKIVSRSKDMRLKAVMRCPPEKQMVEVQFASFGDPTGTCGNFTMGKCSASKSKEVVEKECLGRNYCSIVVARETFGDKGCPEIVKTLAVQVKCEKKEGKQDEKKKKEDKDEEEEDDEDDDEEEEEEDKENKDTKDMENKNQDM.

The signal sequence occupies residues 1 to 31 (MSKSSRIRMKSRTRYLIAILLVISLCSKASS). Residue Glu-197 is the Proton donor of the active site. The Nucleophile role is filled by Glu-268. Residues Asn-269, Asn-300, Asn-395, and Asn-785 are each glycosylated (N-linked (GlcNAc...) asparagine). The SUEL-type lectin domain occupies 752–838 (KDMRLKAVMR…KTLAVQVKCE (87 aa)). The segment covering 838–852 (EKKEGKQDEKKKKED) has biased composition (basic and acidic residues). The disordered stretch occupies residues 838–887 (EKKEGKQDEKKKKEDKDEEEEDDEDDDEEEEEEDKENKDTKDMENKNQDM). Residues 853 to 871 (KDEEEEDDEDDDEEEEEED) show a composition bias toward acidic residues. The span at 872–887 (KENKDTKDMENKNQDM) shows a compositional bias: basic and acidic residues.

Belongs to the glycosyl hydrolase 35 family.

Its subcellular location is the secreted. The protein resides in the extracellular space. It is found in the apoplast. It carries out the reaction Hydrolysis of terminal non-reducing beta-D-galactose residues in beta-D-galactosides.. This is Beta-galactosidase 14 (BGAL14) from Arabidopsis thaliana (Mouse-ear cress).